Consider the following 371-residue polypeptide: uncharacterized protein (371 aa).

This is an uncharacterized protein from Clostridium acetobutylicum (strain ATCC 824 / DSM 792 / JCM 1419 / IAM 19013 / LMG 5710 / NBRC 13948 / NRRL B-527 / VKM B-1787 / 2291 / W).